The primary structure comprises 518 residues: Arrestin-related trafficking adapter 10 (518 aa).

Residue K118 forms a Glycyl lysine isopeptide (Lys-Gly) (interchain with G-Cter in ubiquitin) linkage.

This sequence belongs to the ART10 family. As to quaternary structure, interacts with RSP5. In terms of processing, ubiquitinated by RSP5.

The protein localises to the cytoplasm. Its function is as follows. May regulate endocytosis by recruiting RSP5 ubiquitin ligase activity to specific plasma membrane proteins in response to extracellular stimuli. This chain is Arrestin-related trafficking adapter 10 (ART10), found in Saccharomyces cerevisiae (strain ATCC 204508 / S288c) (Baker's yeast).